The sequence spans 120 residues: UPF0231 protein YacL (120 aa).

This sequence belongs to the UPF0231 family.

This Salmonella paratyphi A (strain ATCC 9150 / SARB42) protein is UPF0231 protein YacL.